The chain runs to 752 residues: Phosphoribosylformylglycinamidine synthase subunit PurL (752 aa).

The active site involves histidine 58. Tyrosine 61 and lysine 103 together coordinate ATP. Glutamate 105 contributes to the Mg(2+) binding site. Residues 106–109 (SHNH) and arginine 128 contribute to the substrate site. The active-site Proton acceptor is the histidine 107. Residue aspartate 129 coordinates Mg(2+). Substrate is bound at residue glutamine 253. Mg(2+) is bound at residue aspartate 281. 325-327 (ESQ) lines the substrate pocket. 2 residues coordinate ATP: aspartate 513 and glycine 550. Asparagine 551 contacts Mg(2+). Substrate is bound at residue serine 553.

The protein belongs to the FGAMS family. As to quaternary structure, monomer. Part of the FGAM synthase complex composed of 1 PurL, 1 PurQ and 2 PurS subunits.

The protein resides in the cytoplasm. It catalyses the reaction N(2)-formyl-N(1)-(5-phospho-beta-D-ribosyl)glycinamide + L-glutamine + ATP + H2O = 2-formamido-N(1)-(5-O-phospho-beta-D-ribosyl)acetamidine + L-glutamate + ADP + phosphate + H(+). It participates in purine metabolism; IMP biosynthesis via de novo pathway; 5-amino-1-(5-phospho-D-ribosyl)imidazole from N(2)-formyl-N(1)-(5-phospho-D-ribosyl)glycinamide: step 1/2. Part of the phosphoribosylformylglycinamidine synthase complex involved in the purines biosynthetic pathway. Catalyzes the ATP-dependent conversion of formylglycinamide ribonucleotide (FGAR) and glutamine to yield formylglycinamidine ribonucleotide (FGAM) and glutamate. The FGAM synthase complex is composed of three subunits. PurQ produces an ammonia molecule by converting glutamine to glutamate. PurL transfers the ammonia molecule to FGAR to form FGAM in an ATP-dependent manner. PurS interacts with PurQ and PurL and is thought to assist in the transfer of the ammonia molecule from PurQ to PurL. This Streptomyces avermitilis (strain ATCC 31267 / DSM 46492 / JCM 5070 / NBRC 14893 / NCIMB 12804 / NRRL 8165 / MA-4680) protein is Phosphoribosylformylglycinamidine synthase subunit PurL.